Consider the following 668-residue polypeptide: Bestrophin-3 (668 aa).

Residues 1–31 (MTVTYSSKVANATFFGFHRLLLKWRGSIYKL) are Cytoplasmic-facing. Ca(2+) is bound at residue Ala-10. The chain crosses the membrane as a helical span at residues 32 to 51 (LYREFIVFAVLYTAISLVYR). The Extracellular segment spans residues 52–60 (LLLTGVQKR). Residues 61–82 (YFEKLSIYCDRYAEQIPVTFVL) traverse the membrane as a helical segment. Residues 83-237 (GFYVTLVVNR…DWVGIPLVYT (155 aa)) lie on the Cytoplasmic side of the membrane. A helical membrane pass occupies residues 238 to 255 (QVVTLAVYTFFFACLIGR). The Extracellular segment spans residues 256–274 (QFLDPTKGYAGHDLDLYIP). Residues 275–288 (IFTLLQFFFYAGWL) traverse the membrane as a helical segment. The Cytoplasmic portion of the chain corresponds to 289–668 (KVAEQLINPF…LNKETEESPK (380 aa)). 4 residues coordinate Ca(2+): Gln-293, Asn-296, Asp-301, and Asp-304. Disordered stretches follow at residues 400 to 454 (SAHE…KKSC), 473 to 493 (RETS…VRTS), and 532 to 570 (TGVQ…VSAS). Over residues 425–436 (PRDDLSPARDLL) the composition is skewed to basic and acidic residues. Residues 475 to 489 (TSQTSTLQSLTPQSS) are compositionally biased toward low complexity. Positions 532–545 (TGVQPSKTEQQQGP) are enriched in polar residues.

Belongs to the anion channel-forming bestrophin (TC 1.A.46) family. Calcium-sensitive chloride channel subfamily. Present in skeletal muscle and weakly in brain, spinal cord, bone marrow and retina.

It is found in the cell membrane. The catalysed reaction is chloride(in) = chloride(out). Ligand-gated anion channel that allows the movement of chloride monoatomic anions across cell membranes when activated by calcium (Ca2+). The chain is Bestrophin-3 from Homo sapiens (Human).